Reading from the N-terminus, the 124-residue chain is Large ribosomal subunit protein bL17 (124 aa).

It belongs to the bacterial ribosomal protein bL17 family. As to quaternary structure, part of the 50S ribosomal subunit. Contacts protein L32.

This chain is Large ribosomal subunit protein bL17, found in Persephonella marina (strain DSM 14350 / EX-H1).